A 407-amino-acid polypeptide reads, in one-letter code: Lysosome-associated membrane glycoprotein 1 (407 aa).

The signal sequence occupies residues 1-21; it reads MAAPGAPRSLLLLLLAGLAHG. The tract at residues 22-189 is first lumenal domain; that stretch reads ASALFVVKDS…SKEETRCTQD (168 aa). The Lumenal portion of the chain corresponds to 22-371; the sequence is ASALFVVKDS…VEECMQDGNN (350 aa). N-linked (GlcNAc...) asparagine glycans are attached at residues N32, N40, N57, N72, N79, N98, N102, N116, N125, N145, N160, and N178. C36 and C75 are disulfide-bonded. C150 and C186 are disulfide-bonded. The interval 183–206 is disordered; sequence ETRCTQDGPSPTTVPPSPSPPLVP. Residues 190–219 form a hinge region; it reads GPSPTTVPPSPSPPLVPTNPTVIKYNVTGE. The segment covering 194–206 has biased composition (pro residues); the sequence is TTVPPSPSPPLVP. 9 N-linked (GlcNAc...) asparagine glycosylation sites follow: N215, N220, N233, N241, N253, N283, N297, N304, and N312. The segment at 220 to 371 is second lumenal domain; that stretch reads NGTCLLASMA…VEECMQDGNN (152 aa). A disulfide bridge links C223 with C260. An intrachain disulfide couples C328 to C365. The chain crosses the membrane as a helical span at residues 372 to 395; sequence MLIPIAVGGALAGLVLIVLIAYLI. Residues 396-407 lie on the Cytoplasmic side of the membrane; that stretch reads GRKRSHAGYQTI.

Belongs to the LAMP family. In terms of assembly, interacts with ABCB9; this interaction strongly stabilizes ABCB9 and protects ABCB9 against lysosomal degradation. Interacts with FURIN. Interacts with TMEM175; inhibiting the proton channel activity of TMEM175. In terms of processing, O- and N-glycosylated; some of the N-glycans attached to LAMP-1 are polylactosaminoglycans.

The protein resides in the lysosome membrane. The protein localises to the endosome membrane. Its subcellular location is the late endosome membrane. It is found in the cell membrane. It localises to the cytolytic granule membrane. In terms of biological role, lysosomal membrane glycoprotein which plays an important role in lysosome biogenesis, lysosomal pH regulation, autophagy and cholesterol homeostasis. Acts as an important regulator of lysosomal lumen pH regulation by acting as a direct inhibitor of the proton channel TMEM175, facilitating lysosomal acidification for optimal hydrolase activity. Also plays an important role in NK-cells cytotoxicity. Mechanistically, participates in cytotoxic granule movement to the cell surface and perforin trafficking to the lytic granule. In addition, protects NK-cells from degranulation-associated damage induced by their own cytotoxic granule content. Presents carbohydrate ligands to selectins. The protein is Lysosome-associated membrane glycoprotein 1 (LAMP1) of Cricetulus griseus (Chinese hamster).